Here is a 95-residue protein sequence, read N- to C-terminus: Co-chaperonin GroES (95 aa).

Residues 36–55 (QEGEVVAVGSGKTLDDGSKV) form a disordered region.

The protein belongs to the GroES chaperonin family. In terms of assembly, heptamer of 7 subunits arranged in a ring. Interacts with the chaperonin GroEL.

Its subcellular location is the cytoplasm. In terms of biological role, together with the chaperonin GroEL, plays an essential role in assisting protein folding. The GroEL-GroES system forms a nano-cage that allows encapsulation of the non-native substrate proteins and provides a physical environment optimized to promote and accelerate protein folding. GroES binds to the apical surface of the GroEL ring, thereby capping the opening of the GroEL channel. This is Co-chaperonin GroES from Natranaerobius thermophilus (strain ATCC BAA-1301 / DSM 18059 / JW/NM-WN-LF).